Consider the following 88-residue polypeptide: NADH-ubiquinone oxidoreductase chain 4L (88 aa).

2 helical membrane-spanning segments follow: residues 22 to 42 (IILMIISIEIMLLAVTLLVLV) and 57 to 77 (IYIIAIAGAESAIGLGILVAY).

This sequence belongs to the complex I subunit 4L family.

The protein resides in the mitochondrion membrane. The catalysed reaction is a ubiquinone + NADH + 5 H(+)(in) = a ubiquinol + NAD(+) + 4 H(+)(out). Core subunit of the mitochondrial membrane respiratory chain NADH dehydrogenase (Complex I) that is believed to belong to the minimal assembly required for catalysis. Complex I functions in the transfer of electrons from NADH to the respiratory chain. The immediate electron acceptor for the enzyme is believed to be ubiquinone. In Trimorphomyces papilionaceus (Jelly fungus), this protein is NADH-ubiquinone oxidoreductase chain 4L (ND4L).